Here is a 438-residue protein sequence, read N- to C-terminus: Glutamyl-tRNA(Gln) amidotransferase subunit D (438 aa).

The Asparaginase/glutaminase domain maps to 92–422; it reads PTITILGTGG…REAKKMMLTN (331 aa). Catalysis depends on residues threonine 102, threonine 178, aspartate 179, and lysine 256.

This sequence belongs to the asparaginase 1 family. GatD subfamily. Heterodimer of GatD and GatE.

The catalysed reaction is L-glutamyl-tRNA(Gln) + L-glutamine + ATP + H2O = L-glutaminyl-tRNA(Gln) + L-glutamate + ADP + phosphate + H(+). In terms of biological role, allows the formation of correctly charged Gln-tRNA(Gln) through the transamidation of misacylated Glu-tRNA(Gln) in organisms which lack glutaminyl-tRNA synthetase. The reaction takes place in the presence of glutamine and ATP through an activated gamma-phospho-Glu-tRNA(Gln). The GatDE system is specific for glutamate and does not act on aspartate. The sequence is that of Glutamyl-tRNA(Gln) amidotransferase subunit D from Pyrococcus furiosus (strain ATCC 43587 / DSM 3638 / JCM 8422 / Vc1).